A 458-amino-acid chain; its full sequence is Ammonium transporter Rh type B (458 aa).

Residues 1-13 (MAGSPSRAAGRRL) lie on the Cytoplasmic side of the membrane. Residues 14–34 (QLPLLCLFLQGATAVLFAVFV) form a helical membrane-spanning segment. Over 35 to 61 (RYNHKTDAALWHRSNHSNADNEFYFRY) the chain is Extracellular. The N-linked (GlcNAc...) asparagine glycan is linked to asparagine 49. The chain crosses the membrane as a helical span at residues 62-82 (PSFQDVHAMVFVGFGFLMVFL). Topologically, residues 83–86 (QRYG) are cytoplasmic. Residues 87 to 107 (FSSVGFTFLLAAFALQWSTLV) form a helical membrane-spanning segment. Residues 108–124 (QGFLHSFHGGHIHVGVE) are Extracellular-facing. Residues 125-145 (SMINADFCAGAVLISFGAVLG) traverse the membrane as a helical segment. Over 146–149 (KTGP) the chain is Cytoplasmic. The helical transmembrane segment at 150 to 170 (TQLLLMALLEVVLFGINEFVL) threads the bilayer. Topologically, residues 171–178 (LHLLGVRD) are extracellular. A helical membrane pass occupies residues 179–201 (AGGSMTIHTFGAYFGLVLSRVLY). Residues 202–219 (RPQLEKSKHRQGSVYHSD) lie on the Cytoplasmic side of the membrane. Residues 220–240 (LFAMIGTIFLWIFWPSFNAAL) traverse the membrane as a helical segment. Residues 241–251 (TALGAGQHRTA) are Extracellular-facing. A helical transmembrane segment spans residues 252–272 (LNTYYSLAASTLGTFALSALV). At 273-282 (GEDGRLDMVH) the chain is on the cytoplasmic side. Residues 283-303 (IQNAALAGGVVVGTSSEMMLT) form a helical membrane-spanning segment. Residue proline 304 is a topological domain, extracellular. A helical transmembrane segment spans residues 305–325 (FGALAAGFLAGTVSTLGYKFF). Over 326–346 (TPILESKFKVQDTCGVHNLHG) the chain is Cytoplasmic. Residues 347 to 367 (MPGVLGALLGVLVAGLATHEA) traverse the membrane as a helical segment. Topologically, residues 368–393 (YGDGLESVFPLIAEGQRSATSQAMHQ) are extracellular. The helical transmembrane segment at 394–414 (LFGLFVTLMFASVGGGLGGLL) threads the bilayer. Residues 415-458 (LKLPFLDSPPDSQHYEDQVHWQVPGEHEDKAQRPLRVEEADTQA) are Cytoplasmic-facing. The interaction with ANK3 stretch occupies residues 416–424 (KLPFLDSPP). The disordered stretch occupies residues 436-458 (QVPGEHEDKAQRPLRVEEADTQA).

This sequence belongs to the ammonium transporter (TC 2.A.49) family. Rh subfamily. As to quaternary structure, interacts (via C-terminus) with ANK2 and ANK3; required for targeting to the basolateral membrane. Post-translationally, N-glycosylated. Specifically expressed in kidney. Also detected in liver and ovary.

Its subcellular location is the cell membrane. The protein resides in the basolateral cell membrane. The catalysed reaction is NH4(+)(in) = NH4(+)(out). It carries out the reaction methylamine(out) = methylamine(in). The enzyme catalyses CO2(out) = CO2(in). Ammonium transporter involved in the maintenance of acid-base homeostasis. Transports ammonium and its related derivative methylammonium across the basolateral plasma membrane of epithelial cells likely contributing to renal transepithelial ammonia transport and ammonia metabolism. May transport either NH4(+) or NH3 ammonia species predominantly mediating an electrogenic NH4(+) transport. May act as a CO2 channel providing for renal acid secretion. This chain is Ammonium transporter Rh type B, found in Homo sapiens (Human).